Consider the following 356-residue polypeptide: uncharacterized protein (356 aa).

Residues 25–72 (EENNQENNKKFIEEFYPDKESDKNFSDDDSDDSDDSDDSENSDEEFDN) form a disordered region. A compositionally biased stretch (basic and acidic residues) spans 31 to 50 (NNKKFIEEFYPDKESDKNFS). The segment covering 51-70 (DDDSDDSDDSDDSENSDEEF) has biased composition (acidic residues). A coiled-coil region spans residues 328 to 356 (EDTLNHSHSNKIKELENKITELKYQNEIN).

The protein belongs to the mimivirus L17/R827 family.

This is an uncharacterized protein from Acanthamoeba polyphaga mimivirus (APMV).